We begin with the raw amino-acid sequence, 231 residues long: Dephospho-CoA kinase domain-containing protein (231 aa).

Residues 3-207 form the DPCK domain; that stretch reads LVGLTGGIAS…HSLEYLPLRL (205 aa). Position 8–15 (8–15) interacts with ATP; it reads GGIASGKS.

Belongs to the CoaE family.

This Bos taurus (Bovine) protein is Dephospho-CoA kinase domain-containing protein (DCAKD).